The following is a 157-amino-acid chain: Protein FAM219A (157 aa).

Methionine 1 is subject to N-acetylmethionine. The disordered stretch occupies residues 1–103 (MMEEIDRFQD…SRYSSSGYSS (103 aa)). Residues 17-33 (SDRDCDAREEKQRELAR) show a composition bias toward basic and acidic residues. Over residues 38–52 (KNGSMGSPVNQQPKK) the composition is skewed to polar residues. 2 positions are modified to phosphoserine: serine 44 and serine 74. Threonine 85 carries the post-translational modification Phosphothreonine. A phosphoserine mark is found at serine 87 and serine 94. Low complexity predominate over residues 94–103 (SRYSSSGYSS).

Belongs to the FAM219 family.

In Mus musculus (Mouse), this protein is Protein FAM219A (Fam219a).